The sequence spans 517 residues: Meiosis-specific transcription factor mei4 (517 aa).

The segment at residues 81–172 (KPPCSYATLI…QNFVSVRLHR (92 aa)) is a DNA-binding region (fork-head). A disordered region spans residues 170-278 (LHRSHSTDSN…PNAETQEDLP (109 aa)). Low complexity predominate over residues 209 to 223 (NSFNSSTSTSGSSSN). A compositionally biased stretch (polar residues) spans 230–246 (NDASQPSNQDSSLNSNI). A compositionally biased stretch (low complexity) spans 254–270 (SNVQSNSSSSENVPKPN).

It is found in the nucleus. Its function is as follows. Functions as a meiosis-specific transcription factor. Binds to the 5'-GTAAAYA-3' consensus sequence of the promoter of the spo6 gene. In Schizosaccharomyces pombe (strain 972 / ATCC 24843) (Fission yeast), this protein is Meiosis-specific transcription factor mei4 (mei4).